The chain runs to 593 residues: V-type ATP synthase alpha chain (593 aa).

246-253 contributes to the ATP binding site; it reads GPFGAGKT.

It belongs to the ATPase alpha/beta chains family.

It carries out the reaction ATP + H2O + 4 H(+)(in) = ADP + phosphate + 5 H(+)(out). Functionally, produces ATP from ADP in the presence of a proton gradient across the membrane. The V-type alpha chain is a catalytic subunit. This Protochlamydia amoebophila (strain UWE25) protein is V-type ATP synthase alpha chain.